The following is a 282-amino-acid chain: Acyl-CoA-binding domain-containing protein 6 (282 aa).

The disordered stretch occupies residues 1-39 (MATPFLPSGATTGDSGGELSSGDDSGDMESFQTPEAEGT). A Phosphoserine modification is found at Ser41. The ACB domain occupies 42 to 127 (LAELFEKAAA…VKKLDPGWNP (86 aa)). Residues 69–73 (YARFK) and Lys95 each bind an acyl-CoA. Ser106 bears the Phosphoserine mark. Tyr114 is a binding site for an acyl-CoA. 2 ANK repeats span residues 191-220 (EGRALLHWACDRGHKELVKVLLQYEAGINC) and 224-253 (EGQTALHYAAACEFLDIVELLLQSGADPTL).

Monomer.

It is found in the cytoplasm. Its subcellular location is the nucleus. In terms of biological role, binds long-chain acyl-coenzyme A molecules with a strong preference for unsaturated C18:1-CoA, lower affinity for unsaturated C20:4-CoA, and very weak affinity for saturated C16:0-CoA. Does not bind fatty acids. Plays a role in protein N-myristoylation. In Mus musculus (Mouse), this protein is Acyl-CoA-binding domain-containing protein 6 (Acbd6).